The sequence spans 234 residues: BTB/POZ domain-containing protein KCTD5 (234 aa).

The residue at position 2 (Ala2) is an N-acetylalanine. Positions 44–146 constitute a BTB domain; sequence KWVRLNVGGT…LVKDKIRERD (103 aa). Residues 213–234 form a disordered region; that stretch reads PYGTTSEPSEKAKILQERGSRM. Residues 220 to 234 are compositionally biased toward basic and acidic residues; that stretch reads PSEKAKILQERGSRM.

As to quaternary structure, homopentamer. Interacts (via C-terminus) with GRASP55/GORASP2. Interacts with CUL3 and with ubiquitinated proteins. Interacts with CRY1.

The protein resides in the cytoplasm. It is found in the cytosol. Its subcellular location is the nucleus. Its interaction with CUL3 suggests that it may act as a substrate adapter in some E3 ligase complex. Does not affect the function of Kv channel Kv2.1/KCNB1, Kv1.2/KCNA2, Kv4.2/KCND2 and Kv3.4/KCNC4. In Mus musculus (Mouse), this protein is BTB/POZ domain-containing protein KCTD5 (Kctd5).